The primary structure comprises 232 residues: Large ribosomal subunit protein uL1 (232 aa).

It belongs to the universal ribosomal protein uL1 family. In terms of assembly, part of the 50S ribosomal subunit.

Functionally, binds directly to 23S rRNA. The L1 stalk is quite mobile in the ribosome, and is involved in E site tRNA release. Protein L1 is also a translational repressor protein, it controls the translation of the L11 operon by binding to its mRNA. In Burkholderia vietnamiensis (strain G4 / LMG 22486) (Burkholderia cepacia (strain R1808)), this protein is Large ribosomal subunit protein uL1.